The primary structure comprises 226 residues: MTRKIIAVIPASGVGSRMQAGLPKQYLKLQNKTILEHTLEIFLAHPDIEKIVVAVAETDPFYPQVALLDSPKIQIVFGGETRAHSVFNALQVIEDDSWVLVHDAARPCLKRSDLDKLLQSDAKHGAILATPAIDTMKRADGDKIMHTEDRSTLWHALTPQFFPTHLLKQALISAFEKNLTVTDEASAMEFSGYQPRLIAGRSDNLKITRPEDLALAEFYLTQNTEK.

It belongs to the IspD/TarI cytidylyltransferase family. IspD subfamily.

The catalysed reaction is 2-C-methyl-D-erythritol 4-phosphate + CTP + H(+) = 4-CDP-2-C-methyl-D-erythritol + diphosphate. The protein operates within isoprenoid biosynthesis; isopentenyl diphosphate biosynthesis via DXP pathway; isopentenyl diphosphate from 1-deoxy-D-xylulose 5-phosphate: step 2/6. Its function is as follows. Catalyzes the formation of 4-diphosphocytidyl-2-C-methyl-D-erythritol from CTP and 2-C-methyl-D-erythritol 4-phosphate (MEP). This chain is 2-C-methyl-D-erythritol 4-phosphate cytidylyltransferase, found in Actinobacillus pleuropneumoniae serotype 7 (strain AP76).